The primary structure comprises 487 residues: 3-octaprenyl-4-hydroxybenzoate carboxy-lyase (487 aa).

Asparagine 172 is a Mn(2+) binding site. Prenylated FMN-binding positions include 175 to 177 (IYR), 189 to 191 (RWL), and 194 to 195 (RG). Residue glutamate 238 coordinates Mn(2+). Aspartate 287 functions as the Proton donor in the catalytic mechanism.

Belongs to the UbiD family. As to quaternary structure, homohexamer. It depends on prenylated FMN as a cofactor. Mn(2+) serves as cofactor.

The protein resides in the cell membrane. The enzyme catalyses a 4-hydroxy-3-(all-trans-polyprenyl)benzoate + H(+) = a 2-(all-trans-polyprenyl)phenol + CO2. The protein operates within cofactor biosynthesis; ubiquinone biosynthesis. Functionally, catalyzes the decarboxylation of 3-octaprenyl-4-hydroxy benzoate to 2-octaprenylphenol, an intermediate step in ubiquinone biosynthesis. In Nitrosomonas europaea (strain ATCC 19718 / CIP 103999 / KCTC 2705 / NBRC 14298), this protein is 3-octaprenyl-4-hydroxybenzoate carboxy-lyase.